Here is a 132-residue protein sequence, read N- to C-terminus: Translation initiation factor 5A (132 aa).

Lys36 bears the Hypusine mark.

It belongs to the eIF-5A family.

It localises to the cytoplasm. In terms of biological role, functions by promoting the formation of the first peptide bond. The chain is Translation initiation factor 5A (eIF5A) from Pyrobaculum neutrophilum (strain DSM 2338 / JCM 9278 / NBRC 100436 / V24Sta) (Thermoproteus neutrophilus).